The following is a 650-amino-acid chain: Protein KINESIN LIGHT CHAIN-RELATED 3 (650 aa).

The segment at 104–141 is disordered; it reads EKQTGKKNVTKSNVGVGGMRKKKVGGTKLQNGNEEPSS. The span at 131 to 141 shows a compositional bias: polar residues; it reads KLQNGNEEPSS. 10 TPR repeats span residues 192–225, 235–268, 277–310, 319–353, 359–392, 401–434, 444–477, 485–518, 527–560, and 569–602; these read IMCL…PVVE, FAGL…QKKV, GETC…HRES, AADR…AANG, AFVD…LKTA, GSVY…YESH, ASGL…YADS, AGIE…LRAT, GIAL…LEQE, and LGLY…REEK.

Belongs to the kinesin light chain family.

The sequence is that of Protein KINESIN LIGHT CHAIN-RELATED 3 from Arabidopsis thaliana (Mouse-ear cress).